We begin with the raw amino-acid sequence, 229 residues long: uncharacterized protein (229 aa).

The protein to T.pallidum TP_0315, TP_0618 and TP_0619.

This is an uncharacterized protein from Treponema pallidum (strain Nichols).